The chain runs to 197 residues: Putative double homeobox protein 3 (197 aa).

2 consecutive DNA-binding regions (homeobox) follow at residues 46-105 (GRRM…LRQH) and 121-180 (GRRK…WGQS). The interval 102–127 (LRQHRRQSRPWPGRRDPQKGRRKRTA) is disordered.

It belongs to the paired homeobox family. Expressed in hepatoma Hep3B cells.

It is found in the nucleus. In Homo sapiens (Human), this protein is Putative double homeobox protein 3 (DUX3).